The sequence spans 448 residues: Ribosomal protein uS12 methylthiotransferase RimO (448 aa).

The region spanning 10 to 120 is the MTTase N-terminal domain; the sequence is PNIGFVSLGC…VMEHVHKYVP (111 aa). [4Fe-4S] cluster is bound by residues cysteine 19, cysteine 55, cysteine 84, cysteine 152, cysteine 156, and cysteine 159. Positions 138 to 379 constitute a Radical SAM core domain; sequence LTPKHYAYLK…MELQQQISAQ (242 aa). One can recognise a TRAM domain in the interval 382-448; sequence QQKIGKTLPV…ADEYDLWGTC (67 aa).

It belongs to the methylthiotransferase family. RimO subfamily. It depends on [4Fe-4S] cluster as a cofactor.

It is found in the cytoplasm. It carries out the reaction L-aspartate(89)-[ribosomal protein uS12]-hydrogen + (sulfur carrier)-SH + AH2 + 2 S-adenosyl-L-methionine = 3-methylsulfanyl-L-aspartate(89)-[ribosomal protein uS12]-hydrogen + (sulfur carrier)-H + 5'-deoxyadenosine + L-methionine + A + S-adenosyl-L-homocysteine + 2 H(+). Functionally, catalyzes the methylthiolation of an aspartic acid residue of ribosomal protein uS12. In Mannheimia succiniciproducens (strain KCTC 0769BP / MBEL55E), this protein is Ribosomal protein uS12 methylthiotransferase RimO.